The primary structure comprises 22 residues: Brevinin-1OKd (22 aa).

Lysine 22 is modified (lysine amide).

In terms of tissue distribution, expressed by the skin glands.

Its subcellular location is the secreted. In terms of biological role, antimicrobial peptide. The sequence is that of Brevinin-1OKd from Nidirana okinavana (Kampira Falls frog).